Here is a 293-residue protein sequence, read N- to C-terminus: ATP synthase gamma chain (293 aa).

Belongs to the ATPase gamma chain family. F-type ATPases have 2 components, CF(1) - the catalytic core - and CF(0) - the membrane proton channel. CF(1) has five subunits: alpha(3), beta(3), gamma(1), delta(1), epsilon(1). CF(0) has three main subunits: a, b and c.

The protein localises to the cell inner membrane. Its function is as follows. Produces ATP from ADP in the presence of a proton gradient across the membrane. The gamma chain is believed to be important in regulating ATPase activity and the flow of protons through the CF(0) complex. This chain is ATP synthase gamma chain, found in Psychrobacter arcticus (strain DSM 17307 / VKM B-2377 / 273-4).